We begin with the raw amino-acid sequence, 214 residues long: Chalcone isomerase-like protein 1 (214 aa).

This sequence belongs to the chalcone isomerase family. In terms of tissue distribution, mostly expressed in glandular trichomes (lupulin glands), and, to a lower extent, in cones, cones bracts, leaves, stems and roots.

The protein resides in the cytoplasm. The enzyme catalyses a chalcone = a flavanone.. The protein operates within secondary metabolite biosynthesis; flavonoid biosynthesis. In terms of biological role, involved in the biosynthesis of prenylated phenolics natural products which contribute to the bitter taste of beer and display broad biological activities. Involved in anthocyanin biosynthesis. Polyketide binding proteins (PBP) which reduces the catalytic activities of CHS_H1 and PT1L and prevents demethylxanthohumol (DMX) production, by binding to DMX and naringenin chalcone (NC) to stabilize the chalconoids ring-opened structure. In Humulus lupulus (European hop), this protein is Chalcone isomerase-like protein 1.